Consider the following 191-residue polypeptide: Putative 3-methyladenine DNA glycosylase (191 aa).

Belongs to the DNA glycosylase MPG family.

This Cutibacterium acnes (strain DSM 16379 / KPA171202) (Propionibacterium acnes) protein is Putative 3-methyladenine DNA glycosylase.